The following is an 860-amino-acid chain: Rod cGMP-specific 3',5'-cyclic phosphodiesterase subunit alpha (860 aa).

Gly-2 is modified (N-acetylglycine). GAF domains are found at residues 73-222 (QTEK…NLIM) and 254-431 (DIER…GWSV). One can recognise a PDEase domain in the interval 483–816 (EEEELAEILQ…KEWKALADEY (334 aa)). His-559 acts as the Proton donor in catalysis. Residues His-563, His-599, Asp-600, and Asp-720 each contribute to the a divalent metal cation site. Residues 821–860 (KVQEEKKQKQQSAKSAAAGNQPGGNPSPGGATTSKSCCIQ) form a disordered region. A compositionally biased stretch (low complexity) spans 830 to 851 (QQSAKSAAAGNQPGGNPSPGGA). Cysteine methyl ester is present on Cys-857. A lipid anchor (S-farnesyl cysteine) is attached at Cys-857. Positions 858 to 860 (CIQ) are cleaved as a propeptide — removed in mature form.

The protein belongs to the cyclic nucleotide phosphodiesterase family. As to quaternary structure, oligomer composed of two catalytic chains (alpha and beta), an inhibitory chain (gamma) and the delta chain. A divalent metal cation serves as cofactor.

The protein localises to the cell membrane. The protein resides in the cell projection. It is found in the cilium. It localises to the photoreceptor outer segment. The enzyme catalyses 3',5'-cyclic GMP + H2O = GMP + H(+). Functionally, rod-specific cGMP phosphodiesterase that catalyzes the hydrolysis of 3',5'-cyclic GMP. This protein participates in processes of transmission and amplification of the visual signal. The protein is Rod cGMP-specific 3',5'-cyclic phosphodiesterase subunit alpha of Homo sapiens (Human).